The sequence spans 103 residues: Large ribosomal subunit protein uL24 (103 aa).

Belongs to the universal ribosomal protein uL24 family. Part of the 50S ribosomal subunit.

Functionally, one of two assembly initiator proteins, it binds directly to the 5'-end of the 23S rRNA, where it nucleates assembly of the 50S subunit. In terms of biological role, one of the proteins that surrounds the polypeptide exit tunnel on the outside of the subunit. This Lachnospira eligens (strain ATCC 27750 / DSM 3376 / VPI C15-48 / C15-B4) (Eubacterium eligens) protein is Large ribosomal subunit protein uL24.